The following is a 191-amino-acid chain: Thymidine kinase (191 aa).

ATP contacts are provided by residues 15–22 (GPMYSGKT) and 88–91 (DEAQ). The active-site Proton acceptor is Glu89. Cys145, Cys148, Cys183, and Cys186 together coordinate Zn(2+).

The protein belongs to the thymidine kinase family. Homotetramer.

Its subcellular location is the cytoplasm. It carries out the reaction thymidine + ATP = dTMP + ADP + H(+). The protein is Thymidine kinase of Clostridium botulinum (strain Hall / ATCC 3502 / NCTC 13319 / Type A).